The sequence spans 105 residues: Large ribosomal subunit protein bL21 (105 aa).

The protein belongs to the bacterial ribosomal protein bL21 family. Part of the 50S ribosomal subunit. Contacts protein L20.

This protein binds to 23S rRNA in the presence of protein L20. The polypeptide is Large ribosomal subunit protein bL21 (Rhizobium rhizogenes (strain K84 / ATCC BAA-868) (Agrobacterium radiobacter)).